Here is a 403-residue protein sequence, read N- to C-terminus: Flagellar hook protein FlgE (403 aa).

Belongs to the flagella basal body rod proteins family.

The protein localises to the bacterial flagellum basal body. The chain is Flagellar hook protein FlgE (flgE) from Salmonella typhi.